A 625-amino-acid chain; its full sequence is Transferrin-binding protein B (625 aa).

Residues 1-17 (MKSVPLISGGLSLFLSA) form the signal peptide. A lipid anchor (N-palmitoyl cysteine) is attached at Cys-18. Cys-18 is lipidated: S-diacylglycerol cysteine. Disordered stretches follow at residues 25–52 (FDVD…KKSN), 99–125 (KKEN…QNHH), 275–298 (VKPT…GGFY), and 584–610 (FTYN…KARA). Residues 276 to 292 (KPTEKDSEEHPFTREGT) show a composition bias toward basic and acidic residues. The segment covering 587–605 (NGKNPTDKNSPTASSPSNS) has biased composition (polar residues).

The protein belongs to the TbpB family.

Its subcellular location is the cell outer membrane. The protein localises to the cell surface. In terms of biological role, haemophilus acquires iron by extracting it from serum transferrin (TF) in its human host. Acts as a transferrin receptor and is required for transferrin utilization. This is Transferrin-binding protein B (tbpB) from Haemophilus influenzae (strain ATCC 51907 / DSM 11121 / KW20 / Rd).